We begin with the raw amino-acid sequence, 55 residues long: MLYWALVFLVVAIIAGALGFGGIAGASAGIAQILFYIFLILLVVSLLFGLFRRAR.

Helical transmembrane passes span W4 to A24 and I30 to L50.

The protein belongs to the UPF0391 family.

The protein resides in the cell membrane. The sequence is that of UPF0391 membrane protein Meso_3110 from Chelativorans sp. (strain BNC1).